Consider the following 446-residue polypeptide: Trigger factor (446 aa).

Residues 182 to 267 (GDKVVVDYQN…VKNIFMMKAI (86 aa)) enclose the PPIase FKBP-type domain.

Belongs to the FKBP-type PPIase family. Tig subfamily.

The protein resides in the cytoplasm. The catalysed reaction is [protein]-peptidylproline (omega=180) = [protein]-peptidylproline (omega=0). Functionally, involved in protein export. Acts as a chaperone by maintaining the newly synthesized protein in an open conformation. Functions as a peptidyl-prolyl cis-trans isomerase. The chain is Trigger factor from Ehrlichia ruminantium (strain Gardel).